The following is a 423-amino-acid chain: Cytochrome b mRNA maturase bI2 (423 aa).

Residues 1-31 are Mitochondrial matrix-facing; that stretch reads MAFRKSNVYLSLVNSYIIDSPQPSSINYWWN. The cytochrome b stretch occupies residues 1–143; it reads MAFRKSNVYL…CVYGQMSHWG (143 aa). The helical transmembrane segment at 32 to 52 threads the bilayer; it reads MGSLLGLCLVIQIVTGIFMAM. Topologically, residues 53–84 are mitochondrial intermembrane; that stretch reads HYSSNIELAFSSVEHIMRDVHNGYILRYLHAN. A helical membrane pass occupies residues 85–105; the sequence is GASFFFMVMFMHMAKGLYYGS. Over 106–115 the chain is Mitochondrial matrix; sequence YRSPRVTLWN. A helical transmembrane segment spans residues 116–136; the sequence is VGVIIFILTIATAFLGYCCVY. Topologically, residues 137-153 are mitochondrial intermembrane; sequence GQMSHWGNMNIASNMFN. The maturase stretch occupies residues 144 to 423; the sequence is NMNIASNMFN…SMKYKLGNYL (280 aa). Residues 154-174 form a helical membrane-spanning segment; sequence MMKTIYMMMLMLLIYIFYTIM. Topologically, residues 175–423 are mitochondrial matrix; sequence MRQMMKTKEY…SMKYKLGNYL (249 aa).

It in the N-terminal section; belongs to the cytochrome b family. This sequence in the C-terminal section; belongs to the LAGLIDADG endonuclease family.

It is found in the mitochondrion inner membrane. Its function is as follows. This protein is responsible for splicing and maturation of cytochrome b mRNA. Specifically, it may be responsible for the splicing specificity of the second intron. The sequence is that of Cytochrome b mRNA maturase bI2 (BI2) from Saccharomyces cerevisiae (strain ATCC 204508 / S288c) (Baker's yeast).